We begin with the raw amino-acid sequence, 269 residues long: Endo-1,3-1,4-beta-glycanase ExoK (269 aa).

Positions 1 to 29 (MTIDRYRRFARLAFIATLPLAGLATAAAA) are cleaved as a signal peptide. One can recognise a GH16 domain in the interval 40–252 (DDFDTLDTRV…RVAFTAAGDE (213 aa)). Catalysis depends on glutamate 138, which acts as the Nucleophile. Glutamate 142 (proton donor) is an active-site residue.

The protein belongs to the glycosyl hydrolase 16 family.

The protein resides in the secreted. It functions in the pathway glycan metabolism; exopolysaccharide biosynthesis. Functionally, cleaves high molecular weight succinoglycan to yield LMW succinoglycan. Dynamically regulates the molecular weight distribution of succinoglycan by cleaving nascent succinoglycan only during a limited period after its synthesis, perhaps before it undergoes a time-dependent change in its conformation or aggregation state. This is Endo-1,3-1,4-beta-glycanase ExoK (exoK) from Rhizobium meliloti (strain 1021) (Ensifer meliloti).